The primary structure comprises 119 residues: Immunoglobulin lambda variable 4-69 (119 aa).

A signal peptide spans 1 to 20 (MAWTPLLFLTLLLHCTGSLS). The framework-1 stretch occupies residues 21–45 (QLVLTQSPSASASLGASVKLTCTLS). The Ig-like domain maps to 21 to 119 (QLVLTQSPSA…YYCQTWGTGI (99 aa)). Cys-42 and Cys-112 are oxidised to a cystine. The interval 46-52 (SGHSSYA) is complementarity-determining-1. Residues 53 to 69 (IAWHQQQPEKGPRYLMK) are framework-2. The segment at 70-76 (LNSDGSH) is complementarity-determining-2. The tract at residues 73 to 92 (DGSHSKGDGIPDRFSGSSSG) is disordered. The framework-3 stretch occupies residues 77-112 (SKGDGIPDRFSGSSSGAERYLTISSLQSEDEADYYC). Residues 113-119 (QTWGTGI) form a complementarity-determining-3 region.

As to quaternary structure, immunoglobulins are composed of two identical heavy chains and two identical light chains; disulfide-linked.

The protein localises to the secreted. It localises to the cell membrane. Functionally, v region of the variable domain of immunoglobulin light chains that participates in the antigen recognition. Immunoglobulins, also known as antibodies, are membrane-bound or secreted glycoproteins produced by B lymphocytes. In the recognition phase of humoral immunity, the membrane-bound immunoglobulins serve as receptors which, upon binding of a specific antigen, trigger the clonal expansion and differentiation of B lymphocytes into immunoglobulins-secreting plasma cells. Secreted immunoglobulins mediate the effector phase of humoral immunity, which results in the elimination of bound antigens. The antigen binding site is formed by the variable domain of one heavy chain, together with that of its associated light chain. Thus, each immunoglobulin has two antigen binding sites with remarkable affinity for a particular antigen. The variable domains are assembled by a process called V-(D)-J rearrangement and can then be subjected to somatic hypermutations which, after exposure to antigen and selection, allow affinity maturation for a particular antigen. The polypeptide is Immunoglobulin lambda variable 4-69 (Homo sapiens (Human)).